Reading from the N-terminus, the 71-residue chain is Disintegrin horridistatin-2 (71 aa).

In terms of domain architecture, Disintegrin spans 1–71 (GEECDCGSPA…ADCPRNGLYG (71 aa)). 6 disulfide bridges follow: C4-C19, C6-C14, C13-C36, C27-C33, C32-C57, and C45-C64. The short motif at 49–51 (RGD) is the Cell attachment site element.

The protein belongs to the venom metalloproteinase (M12B) family. P-II subfamily. P-IIa sub-subfamily. In terms of assembly, monomer (disintegrin). In terms of tissue distribution, expressed by the venom gland.

The protein resides in the secreted. Functionally, inhibits ADP-induced platelet aggregation (IC(50) is 16.2 nM) by binding to alpha-IIb/beta-3 (ITGA2B/ITGB3). This Crotalus horridus (Timber rattlesnake) protein is Disintegrin horridistatin-2.